We begin with the raw amino-acid sequence, 96 residues long: ATP synthase subunit c (96 aa).

2 helical membrane passes run 26–46 and 68–88; these read GLVL…CGIG and IMVT…YALV.

The protein belongs to the ATPase C chain family. F-type ATPases have 2 components, F(1) - the catalytic core - and F(0) - the membrane proton channel. F(1) has five subunits: alpha(3), beta(3), gamma(1), delta(1), epsilon(1). F(0) has three main subunits: a(1), b(2) and c(10-14). The alpha and beta chains form an alternating ring which encloses part of the gamma chain. F(1) is attached to F(0) by a central stalk formed by the gamma and epsilon chains, while a peripheral stalk is formed by the delta and b chains.

The protein localises to the cell inner membrane. Its function is as follows. F(1)F(0) ATP synthase produces ATP from ADP in the presence of a proton or sodium gradient. F-type ATPases consist of two structural domains, F(1) containing the extramembraneous catalytic core and F(0) containing the membrane proton channel, linked together by a central stalk and a peripheral stalk. During catalysis, ATP synthesis in the catalytic domain of F(1) is coupled via a rotary mechanism of the central stalk subunits to proton translocation. In terms of biological role, key component of the F(0) channel; it plays a direct role in translocation across the membrane. A homomeric c-ring of between 10-14 subunits forms the central stalk rotor element with the F(1) delta and epsilon subunits. This Oleidesulfovibrio alaskensis (strain ATCC BAA-1058 / DSM 17464 / G20) (Desulfovibrio alaskensis) protein is ATP synthase subunit c.